Here is a 95-residue protein sequence, read N- to C-terminus: Small ribosomal subunit protein uS19 (95 aa).

The tract at residues glutamate 73–lysine 95 is disordered.

The protein belongs to the universal ribosomal protein uS19 family.

Functionally, protein S19 forms a complex with S13 that binds strongly to the 16S ribosomal RNA. This chain is Small ribosomal subunit protein uS19, found in Deinococcus geothermalis (strain DSM 11300 / CIP 105573 / AG-3a).